The primary structure comprises 294 residues: UDP-3-O-acyl-N-acetylglucosamine deacetylase (294 aa).

Residues histidine 75, histidine 232, and aspartate 236 each coordinate Zn(2+). Catalysis depends on histidine 259, which acts as the Proton donor.

This sequence belongs to the LpxC family. Requires Zn(2+) as cofactor.

The catalysed reaction is a UDP-3-O-[(3R)-3-hydroxyacyl]-N-acetyl-alpha-D-glucosamine + H2O = a UDP-3-O-[(3R)-3-hydroxyacyl]-alpha-D-glucosamine + acetate. The protein operates within glycolipid biosynthesis; lipid IV(A) biosynthesis; lipid IV(A) from (3R)-3-hydroxytetradecanoyl-[acyl-carrier-protein] and UDP-N-acetyl-alpha-D-glucosamine: step 2/6. In terms of biological role, catalyzes the hydrolysis of UDP-3-O-myristoyl-N-acetylglucosamine to form UDP-3-O-myristoylglucosamine and acetate, the committed step in lipid A biosynthesis. In Campylobacter jejuni subsp. jejuni serotype O:6 (strain 81116 / NCTC 11828), this protein is UDP-3-O-acyl-N-acetylglucosamine deacetylase.